We begin with the raw amino-acid sequence, 211 residues long: ATP phosphoribosyltransferase (211 aa).

The protein belongs to the ATP phosphoribosyltransferase family. Short subfamily. Heteromultimer composed of HisG and HisZ subunits.

The protein localises to the cytoplasm. It carries out the reaction 1-(5-phospho-beta-D-ribosyl)-ATP + diphosphate = 5-phospho-alpha-D-ribose 1-diphosphate + ATP. The protein operates within amino-acid biosynthesis; L-histidine biosynthesis; L-histidine from 5-phospho-alpha-D-ribose 1-diphosphate: step 1/9. Catalyzes the condensation of ATP and 5-phosphoribose 1-diphosphate to form N'-(5'-phosphoribosyl)-ATP (PR-ATP). Has a crucial role in the pathway because the rate of histidine biosynthesis seems to be controlled primarily by regulation of HisG enzymatic activity. This Rippkaea orientalis (strain PCC 8801 / RF-1) (Cyanothece sp. (strain PCC 8801)) protein is ATP phosphoribosyltransferase.